The chain runs to 263 residues: Mediator of RNA polymerase II transcription subunit 4 (263 aa).

Residues 61 to 111 (LQLAAEQAGIEKNMDALREQVRKQDEEINQLQRQLKEAEQILATSIFQARQ) adopt a coiled-coil conformation. 2 disordered regions span residues 209-228 (APNQ…MGAG) and 235-263 (DTRA…SDSQ). Low complexity predominate over residues 251–263 (STESSSSSSSDSQ).

It belongs to the Mediator complex subunit 4 family. As to quaternary structure, component of the Mediator complex.

It is found in the nucleus. Its function is as follows. Component of the Mediator complex, a coactivator involved in the regulated transcription of nearly all RNA polymerase II-dependent genes. Mediator functions as a bridge to convey information from gene-specific regulatory proteins to the basal RNA polymerase II transcription machinery. Mediator is recruited to promoters by direct interactions with regulatory proteins and serves as a scaffold for the assembly of a functional preinitiation complex with RNA polymerase II and the general transcription factors. The sequence is that of Mediator of RNA polymerase II transcription subunit 4 (MED4) from Anopheles gambiae (African malaria mosquito).